Reading from the N-terminus, the 537-residue chain is O-phosphoserine--tRNA(Cys) ligase (537 aa).

Substrate-binding positions include 186–188 (HMT), 231–233 (SAS), 273–274 (YY), and Asn-317.

It belongs to the class-II aminoacyl-tRNA synthetase family. O-phosphoseryl-tRNA(Cys) synthetase subfamily. In terms of assembly, homotetramer. Interacts with SepCysS.

It catalyses the reaction tRNA(Cys) + O-phospho-L-serine + ATP = O-phospho-L-seryl-tRNA(Cys) + AMP + diphosphate. Catalyzes the attachment of O-phosphoserine (Sep) to tRNA(Cys). The protein is O-phosphoserine--tRNA(Cys) ligase of Methanococcus maripaludis (strain C7 / ATCC BAA-1331).